The following is a 631-amino-acid chain: Transcription factor dibT (631 aa).

A DNA-binding region (zn(2)-C6 fungal-type) is located at residues 11–38 (CWTCRLRRKRCDSVQPVCGSCQSLEITC). Low complexity predominate over residues 123–144 (SLADSSASTPSTSSGRPTTLRS). 2 disordered regions span residues 123 to 148 (SLAD…SVDR) and 469 to 488 (GLKD…TSAG).

Its subcellular location is the nucleus. Its function is as follows. Transcription factor; part of the gene cluster that mediates the biosynthesis of pestalotiollide B which is part of dibenzodioxocinones, a novel class of inhibitors against cholesterol ester transfer protein (CEPT). Acts as the key transcription factor within the cluster and positively regulates the expression of the cluster genes and the subsequent production of dibenzodioxocinones such as pestalotiollide B, pestalotiollide C, 1',2'-dehydropenicillide, 3'-methoxy-1',2'-dehydropenicillide and 1',2'-epoxy-3',4'-didehydropenicillide. Required for the expression of most PKS genes outside of the dibenzodioxocinones cluster, (43 out of 48 defined PKS genes), and promotes pigmentation of the mycelium and conidia. The polypeptide is Transcription factor dibT (Pestalotiopsis microspora).